The sequence spans 641 residues: 1-deoxy-D-xylulose-5-phosphate synthase (641 aa).

Thiamine diphosphate is bound by residues His79 and 120-122; that span reads GHS. Asp151 serves as a coordination point for Mg(2+). Thiamine diphosphate contacts are provided by residues 152–153, Asn180, Tyr291, and Glu375; that span reads GS. Asn180 serves as a coordination point for Mg(2+).

The protein belongs to the transketolase family. DXPS subfamily. In terms of assembly, homodimer. It depends on Mg(2+) as a cofactor. Thiamine diphosphate serves as cofactor.

The enzyme catalyses D-glyceraldehyde 3-phosphate + pyruvate + H(+) = 1-deoxy-D-xylulose 5-phosphate + CO2. Its pathway is metabolic intermediate biosynthesis; 1-deoxy-D-xylulose 5-phosphate biosynthesis; 1-deoxy-D-xylulose 5-phosphate from D-glyceraldehyde 3-phosphate and pyruvate: step 1/1. Its function is as follows. Catalyzes the acyloin condensation reaction between C atoms 2 and 3 of pyruvate and glyceraldehyde 3-phosphate to yield 1-deoxy-D-xylulose-5-phosphate (DXP). This Nitratidesulfovibrio vulgaris (strain ATCC 29579 / DSM 644 / CCUG 34227 / NCIMB 8303 / VKM B-1760 / Hildenborough) (Desulfovibrio vulgaris) protein is 1-deoxy-D-xylulose-5-phosphate synthase.